Reading from the N-terminus, the 91-residue chain is UPF0298 protein OB1449 (91 aa).

The protein belongs to the UPF0298 family.

It localises to the cytoplasm. This chain is UPF0298 protein OB1449, found in Oceanobacillus iheyensis (strain DSM 14371 / CIP 107618 / JCM 11309 / KCTC 3954 / HTE831).